We begin with the raw amino-acid sequence, 101 residues long: Small ribosomal subunit protein bS18c (101 aa).

This sequence belongs to the bacterial ribosomal protein bS18 family. In terms of assembly, part of the 30S ribosomal subunit.

The protein localises to the plastid. The protein resides in the chloroplast. This chain is Small ribosomal subunit protein bS18c, found in Populus alba (White poplar).